A 32-amino-acid chain; its full sequence is AFCRFNGQQCTSDGQCCNGRCINAFQGRICIG.

3 disulfides stabilise this stretch: Cys3–Cys17, Cys10–Cys21, and Cys16–Cys30.

As to expression, expressed by the venom gland.

It is found in the secreted. This is U6-ctenitoxin-Pr1a from Phoneutria reidyi (Brazilian Amazonian armed spider).